The following is a 224-amino-acid chain: MANNLVQLIFDQFIEILEDLAAKDEWCFDFNKCDFDFRVRELVNHRLLDVKYTIKDECGRPRDVIQEIDITGICYEDLTTCKWVDYLTKLAVEYINNICPPRYIIIKEEPKKCRPQLPEWNPFPCKRTTTIYRRQKPVEKKPECEVIFEKGCECLPSCEREVPVPKEQIFIKYEPVPAKCCERTVLVRSPEQNRHSFGVHKGNIDYNNHVWPKCCQSKKCNCAH.

The protein localises to the virion. This is an uncharacterized protein from Acanthamoeba polyphaga mimivirus (APMV).